We begin with the raw amino-acid sequence, 683 residues long: WD repeat-containing protein 48 homolog (683 aa).

WD repeat units lie at residues 27–82, 88–130, 133–167, 176–215, 218–257, 260–299, and 302–343; these read SNRS…PVQY, QHTD…FIDC, THKD…INAN, GCKD…KIMK, GHTD…CIAT, AHEE…KSQL, and KEEA…QLSI. The segment at 341-364 is disordered; that stretch reads LSIGGDEDGPSTSNANHSVSASSS. The segment covering 351-364 has biased composition (low complexity); it reads STSNANHSVSASSS. The stretch at 389–428 is one WD 8 repeat; it reads PGAPAIKKHAMLSDKRHVLTRDSDGNVALYDVLAARKIKD.

This sequence belongs to the WD repeat WDR48 family. As to quaternary structure, interacts with usp-46; the interaction increases the catalytic activity of usp-46 in the presence of wdr-20. As to expression, expressed in several head neurons and cells in the tail including the anal depressor cell.

Its function is as follows. Together with wdr-20, binds to and stimulates the activity of the deubiquitinating enzyme usp-46, leading to deubiquitination and stabilization of the glr-1 glutamate receptor. The sequence is that of WD repeat-containing protein 48 homolog (wdr-48) from Caenorhabditis elegans.